The following is a 283-amino-acid chain: MAVKVITDSTSCIPKDLAEKYGVEIVSLSVIMNGESYKEVDIDSEAFYDELAKCDKLPTSSQPPMDEFYNAFEKFAKDGHDIVAAFISSKLSGTYTTSHIIKDMILEKYPDVKIDLIDSQTSVMALGIGVLEGAKAAQEGKDFNEVSKIVRNTIEESEIIFVPGTLENLKKGGRIGGAAALFGKMLKINPILTVKEGAVVVMDKVRTKKRAIDKIVEVVKQDLKEKGIKQAVVCHILAEDEAKDLAKRLKEELDLDSMIGEISAVIGVHVGVKSVGIAYARES.

The DegV domain maps to 3–281 (VKVITDSTSC…VKSVGIAYAR (279 aa)). S60 and S92 together coordinate hexadecanoate.

May bind long-chain fatty acids, such as palmitate, and may play a role in lipid transport or fatty acid metabolism. This chain is DegV domain-containing protein CPE0304, found in Clostridium perfringens (strain 13 / Type A).